Consider the following 501-residue polypeptide: Cytoplasmic tRNA 2-thiolation protein 2 (501 aa).

Residues 1–12 are compositionally biased toward basic and acidic residues; sequence MCEMSEEYRESA. Disordered regions lie at residues 1 to 23 and 192 to 214; these read MCEM…RLGT and GVER…PTTA. The residue at position 2 (cysteine 2) is an N-acetylcysteine. Serine 492 bears the Phosphoserine mark.

This sequence belongs to the CTU2/NCS2 family. As to quaternary structure, component of a complex at least composed of URM1, CTU2/NCS2 and CTU1/ATPBD3.

The protein localises to the cytoplasm. It participates in tRNA modification; 5-methoxycarbonylmethyl-2-thiouridine-tRNA biosynthesis. Its function is as follows. Plays a central role in 2-thiolation of mcm(5)S(2)U at tRNA wobble positions of tRNA(Lys), tRNA(Glu) and tRNA(Gln). May act by forming a heterodimer with CTU1/ATPBD3 that ligates sulfur from thiocarboxylated URM1 onto the uridine of tRNAs at wobble position. The chain is Cytoplasmic tRNA 2-thiolation protein 2 from Bos taurus (Bovine).